Reading from the N-terminus, the 331-residue chain is Ketol-acid reductoisomerase (NADP(+)) (331 aa).

The 181-residue stretch at 2–182 (AQLFYDSDAD…GGTRAGILET (181 aa)) folds into the KARI N-terminal Rossmann domain. NADP(+)-binding positions include 25 to 28 (YGSQ), S51, S53, and 83 to 86 (DEFQ). The active site involves H108. Position 134 (G134) interacts with NADP(+). Residues 183-328 (NFKEETETDL…KGLRSMFSWL (146 aa)) form the KARI C-terminal knotted domain. 4 residues coordinate Mg(2+): D191, E195, E227, and E231. S252 is a substrate binding site.

This sequence belongs to the ketol-acid reductoisomerase family. Mg(2+) is required as a cofactor.

The catalysed reaction is (2R)-2,3-dihydroxy-3-methylbutanoate + NADP(+) = (2S)-2-acetolactate + NADPH + H(+). It carries out the reaction (2R,3R)-2,3-dihydroxy-3-methylpentanoate + NADP(+) = (S)-2-ethyl-2-hydroxy-3-oxobutanoate + NADPH + H(+). Its pathway is amino-acid biosynthesis; L-isoleucine biosynthesis; L-isoleucine from 2-oxobutanoate: step 2/4. It functions in the pathway amino-acid biosynthesis; L-valine biosynthesis; L-valine from pyruvate: step 2/4. In terms of biological role, involved in the biosynthesis of branched-chain amino acids (BCAA). Catalyzes an alkyl-migration followed by a ketol-acid reduction of (S)-2-acetolactate (S2AL) to yield (R)-2,3-dihydroxy-isovalerate. In the isomerase reaction, S2AL is rearranged via a Mg-dependent methyl migration to produce 3-hydroxy-3-methyl-2-ketobutyrate (HMKB). In the reductase reaction, this 2-ketoacid undergoes a metal-dependent reduction by NADPH to yield (R)-2,3-dihydroxy-isovalerate. The polypeptide is Ketol-acid reductoisomerase (NADP(+)) (Synechococcus sp. (strain CC9605)).